Here is a 271-residue protein sequence, read N- to C-terminus: tRNA pseudouridine synthase A (271 aa).

Catalysis depends on Asp56, which acts as the Nucleophile. A substrate-binding site is contributed by Tyr120.

The protein belongs to the tRNA pseudouridine synthase TruA family. As to quaternary structure, homodimer.

The enzyme catalyses uridine(38/39/40) in tRNA = pseudouridine(38/39/40) in tRNA. In terms of biological role, formation of pseudouridine at positions 38, 39 and 40 in the anticodon stem and loop of transfer RNAs. The sequence is that of tRNA pseudouridine synthase A from Janthinobacterium sp. (strain Marseille) (Minibacterium massiliensis).